Here is a 64-residue protein sequence, read N- to C-terminus: Large ribosomal subunit protein bL35 (64 aa).

Positions 1-26 (MPKMKSHRGASKRFKRTASGKLKRGR) are enriched in basic residues. Disordered stretches follow at residues 1 to 28 (MPKM…GRAY) and 33 to 52 (FGNK…MVSS).

It belongs to the bacterial ribosomal protein bL35 family.

The protein is Large ribosomal subunit protein bL35 of Exiguobacterium sibiricum (strain DSM 17290 / CCUG 55495 / CIP 109462 / JCM 13490 / 255-15).